Reading from the N-terminus, the 244-residue chain is THO complex subunit 4A (244 aa).

The interval M1–A82 is disordered. N-acetylserine is present on S2. Over residues G21–P35 the composition is skewed to gly residues. Positions M67 to S77 are enriched in basic and acidic residues. Positions T88–T165 constitute an RRM domain. Residues T169–N244 form a disordered region. Residues W187 to G211 are compositionally biased toward gly residues. The span at P220–N244 shows a compositional bias: basic and acidic residues.

It belongs to the ALYREF family.

Its subcellular location is the nucleus. It localises to the nucleoplasm. The protein resides in the nucleolus. Its function is as follows. Export adapter involved in nuclear export of spliced and unspliced mRNA. The protein is THO complex subunit 4A (ALY1) of Arabidopsis thaliana (Mouse-ear cress).